Here is a 315-residue protein sequence, read N- to C-terminus: Voltage-dependent calcium channel gamma-3 subunit (315 aa).

4 helical membrane passes run 8-28 (IQMLITTVGAFAAFSLMTIAV), 104-124 (SSVFPILSVTLLFFGGLCVAA), 135-155 (ILSAGIFFVSAGLSNIIGIIV), and 181-201 (FGAFSFIIAEIVGVVAVHIYI). The segment at 232 to 253 (RRRSSSRSTEPRSRDLSPISKG) is disordered. At serine 248 the chain carries Phosphoserine.

It belongs to the PMP-22/EMP/MP20 family. CACNG subfamily. The L-type calcium channel is composed of five subunits: alpha-1, alpha-2/delta, beta and gamma. Acts as an auxiliary subunit for AMPA-selective glutamate receptors (AMPARs). Found in a complex with GRIA1, GRIA2, GRIA3, GRIA4, CNIH2, CNIH3, CACNG2, CACNG4, CACNG5, CACNG7 and CACNG8. Interacts with AP4M1 and GRIA1; associates GRIA1 with the adaptor protein complex 4 (AP-4) to target GRIA1 to the somatodendritic compartment of neurons.

It localises to the membrane. Regulates the trafficking to the somatodendritic compartment and gating properties of AMPA-selective glutamate receptors (AMPARs). Promotes their targeting to the cell membrane and synapses and modulates their gating properties by slowing their rates of activation, deactivation and desensitization. Does not show subunit-specific AMPA receptor regulation and regulates all AMPAR subunits. Thought to stabilize the calcium channel in an inactivated (closed) state. In Mus musculus (Mouse), this protein is Voltage-dependent calcium channel gamma-3 subunit (Cacng3).